A 248-amino-acid chain; its full sequence is Type III pantothenate kinase (248 aa).

6-13 (DCGNSFIK) contacts ATP. Residues Tyr92 and 99–102 (GLDR) each bind substrate. Asp101 acts as the Proton acceptor in catalysis. Asp121 is a binding site for K(+). Residue Thr124 participates in ATP binding. Residue Thr180 participates in substrate binding.

Belongs to the type III pantothenate kinase family. As to quaternary structure, homodimer. The cofactor is NH4(+). It depends on K(+) as a cofactor.

It localises to the cytoplasm. The enzyme catalyses (R)-pantothenate + ATP = (R)-4'-phosphopantothenate + ADP + H(+). Its pathway is cofactor biosynthesis; coenzyme A biosynthesis; CoA from (R)-pantothenate: step 1/5. Its function is as follows. Catalyzes the phosphorylation of pantothenate (Pan), the first step in CoA biosynthesis. The polypeptide is Type III pantothenate kinase (Ectopseudomonas mendocina (strain ymp) (Pseudomonas mendocina)).